We begin with the raw amino-acid sequence, 157 residues long: Endoribonuclease YbeY (157 aa).

Positions 111, 115, and 121 each coordinate Zn(2+).

This sequence belongs to the endoribonuclease YbeY family. It depends on Zn(2+) as a cofactor.

It is found in the cytoplasm. Its function is as follows. Single strand-specific metallo-endoribonuclease involved in late-stage 70S ribosome quality control and in maturation of the 3' terminus of the 16S rRNA. This Pseudomonas putida (strain ATCC 47054 / DSM 6125 / CFBP 8728 / NCIMB 11950 / KT2440) protein is Endoribonuclease YbeY.